We begin with the raw amino-acid sequence, 701 residues long: Polyribonucleotide nucleotidyltransferase (701 aa).

Mg(2+)-binding residues include aspartate 485 and aspartate 491. One can recognise a KH domain in the interval 552 to 611 (PKIFKTTVDPEKIRDIIGPGGKMINKIIAETNVKIDIEPDGRIFVAAPDDISGNRAISMI). The S1 motif domain occupies 621 to 689 (GQFFLGKVTR…KLGRLSLSRK (69 aa)).

Belongs to the polyribonucleotide nucleotidyltransferase family. Mg(2+) is required as a cofactor.

The protein resides in the cytoplasm. It carries out the reaction RNA(n+1) + phosphate = RNA(n) + a ribonucleoside 5'-diphosphate. In terms of biological role, involved in mRNA degradation. Catalyzes the phosphorolysis of single-stranded polyribonucleotides processively in the 3'- to 5'-direction. This is Polyribonucleotide nucleotidyltransferase from Caldicellulosiruptor bescii (strain ATCC BAA-1888 / DSM 6725 / KCTC 15123 / Z-1320) (Anaerocellum thermophilum).